We begin with the raw amino-acid sequence, 513 residues long: Nuclear pore complex protein NUP58 (513 aa).

Disordered stretches follow at residues 28–62 (QTNS…QPQQ), 217–239 (SVGS…GQQQ), and 356–513 (RETA…TTRR). Residues 30-50 (NSIFSQSQPQQTNSIFSQSQP) are compositionally biased toward polar residues. 2 stretches are compositionally biased toward low complexity: residues 51–62 (QQTNSIFSQPQQ) and 217–227 (SVGSQPSQGQG). Residues 356–365 (RETAKQEAAA) are compositionally biased toward basic and acidic residues. The segment covering 377–386 (STTSTQPSTQ) has biased composition (low complexity). The span at 393 to 427 (SSATPGGSNPPQTSVPTSNPSSGAGFSFLNTPASG) shows a compositional bias: polar residues. The span at 428-446 (PSSSLFATPSSTAPTSSLF) shows a compositional bias: low complexity. 6 consecutive repeat copies span residues 446–447 (FG), 458–459 (FG), 466–467 (FG), 473–474 (FG), 486–487 (FG), and 497–498 (FG). The segment at 446–498 (FGPSPTPTQTPLFGSSPASTFGSTQSLFGQTTPSLTMPSQFGGATPGSGASFG) is 6 X 2 AA repeats of F-G. The segment covering 452 to 484 (PTQTPLFGSSPASTFGSTQSLFGQTTPSLTMPS) has biased composition (polar residues). The span at 504–513 (SRPKSRTTRR) shows a compositional bias: basic residues.

Belongs to the NUP58 family. Part of the nuclear pore complex (NPC). The NPC has an eight-fold symmetrical structure comprising a central transport channel and two rings, the cytoplasmic and nuclear rings, to which eight filaments are attached. The cytoplasmic filaments have loose ends, while the nuclear filaments are joined in a distal ring, forming a nuclear basket. NPCs are highly dynamic in configuration and composition, and can be devided in 3 subcomplexes, the NUP62 subcomplex, the NUP107-160 subcomplex and the NUP93 subcomplex, containing approximately 30 different nucleoporin proteins. Interacts with GAI, NUP62, SKP1A and SKP1B. In terms of tissue distribution, ubiquitous. Higherst expression in cauline leaves, lowest in roots.

It localises to the nucleus envelope. It is found in the nucleus. The protein resides in the nuclear pore complex. Functionally, involved in nucleocytoplasmic trafficking. May have regulatory roles in the gibberellin pathway, in auxin signaling and in light perception. This is Nuclear pore complex protein NUP58 from Arabidopsis thaliana (Mouse-ear cress).